Consider the following 295-residue polypeptide: Probable deoxyhypusine synthase (295 aa).

K267 functions as the Nucleophile in the catalytic mechanism.

It belongs to the deoxyhypusine synthase family. The cofactor is NAD(+).

It carries out the reaction [eIF5A protein]-L-lysine + spermidine = [eIF5A protein]-deoxyhypusine + propane-1,3-diamine. Its pathway is protein modification; eIF5A hypusination. Catalyzes the NAD-dependent oxidative cleavage of spermidine and the subsequent transfer of the butylamine moiety of spermidine to the epsilon-amino group of a specific lysine residue of the eIF-5A precursor protein to form the intermediate deoxyhypusine residue. The protein is Probable deoxyhypusine synthase of Pyrobaculum calidifontis (strain DSM 21063 / JCM 11548 / VA1).